The chain runs to 86 residues: Small ribosomal subunit protein eS27y (86 aa).

The C4-type zinc finger occupies 39-61; sequence CQGCFNITTVFSHSQTVVVCGNC.

The protein belongs to the eukaryotic ribosomal protein eS27 family. Zn(2+) serves as cofactor.

In terms of biological role, may be involved in the elimination of damaged mRNA after UV irradiation. The sequence is that of Small ribosomal subunit protein eS27y (RPS27B) from Arabidopsis thaliana (Mouse-ear cress).